A 178-amino-acid polypeptide reads, in one-letter code: Large ribosomal subunit protein bL25 (178 aa).

This sequence belongs to the bacterial ribosomal protein bL25 family. CTC subfamily. In terms of assembly, part of the 50S ribosomal subunit; part of the 5S rRNA/L5/L18/L25 subcomplex. Contacts the 5S rRNA. Binds to the 5S rRNA independently of L5 and L18.

In terms of biological role, this is one of the proteins that binds to the 5S RNA in the ribosome where it forms part of the central protuberance. The chain is Large ribosomal subunit protein bL25 from Helicobacter pylori (strain ATCC 700392 / 26695) (Campylobacter pylori).